Reading from the N-terminus, the 263-residue chain is Endonuclease 8 (263 aa).

The active-site Schiff-base intermediate with DNA is the Pro-2. The Proton donor role is filled by Glu-3. Lys-53 acts as the Proton donor; for beta-elimination activity in catalysis. DNA is bound by residues Gln-70, Arg-125, and Asn-169. The FPG-type zinc finger occupies 229 to 263 (KVFHRDGELCERCGGIIEKTTLSSRPFYWCPGCQH). Arg-253 functions as the Proton donor; for delta-elimination activity in the catalytic mechanism.

Belongs to the FPG family. It depends on Zn(2+) as a cofactor.

It catalyses the reaction 2'-deoxyribonucleotide-(2'-deoxyribose 5'-phosphate)-2'-deoxyribonucleotide-DNA = a 3'-end 2'-deoxyribonucleotide-(2,3-dehydro-2,3-deoxyribose 5'-phosphate)-DNA + a 5'-end 5'-phospho-2'-deoxyribonucleoside-DNA + H(+). Involved in base excision repair of DNA damaged by oxidation or by mutagenic agents. Acts as a DNA glycosylase that recognizes and removes damaged bases. Has a preference for oxidized pyrimidines, such as thymine glycol, 5,6-dihydrouracil and 5,6-dihydrothymine. Has AP (apurinic/apyrimidinic) lyase activity and introduces nicks in the DNA strand. Cleaves the DNA backbone by beta-delta elimination to generate a single-strand break at the site of the removed base with both 3'- and 5'-phosphates. This chain is Endonuclease 8, found in Escherichia coli O157:H7.